Here is a 476-residue protein sequence, read N- to C-terminus: 3-isopropylmalate dehydratase large subunit (476 aa).

[4Fe-4S] cluster contacts are provided by Cys-357, Cys-417, and Cys-420.

This sequence belongs to the aconitase/IPM isomerase family. LeuC type 1 subfamily. In terms of assembly, heterodimer of LeuC and LeuD. Requires [4Fe-4S] cluster as cofactor.

The catalysed reaction is (2R,3S)-3-isopropylmalate = (2S)-2-isopropylmalate. It functions in the pathway amino-acid biosynthesis; L-leucine biosynthesis; L-leucine from 3-methyl-2-oxobutanoate: step 2/4. Functionally, catalyzes the isomerization between 2-isopropylmalate and 3-isopropylmalate, via the formation of 2-isopropylmaleate. This Mycolicibacterium paratuberculosis (strain ATCC BAA-968 / K-10) (Mycobacterium paratuberculosis) protein is 3-isopropylmalate dehydratase large subunit.